The primary structure comprises 425 residues: UPF0597 protein VF_0641 (425 aa).

Belongs to the UPF0597 family.

The sequence is that of UPF0597 protein VF_0641 from Aliivibrio fischeri (strain ATCC 700601 / ES114) (Vibrio fischeri).